Reading from the N-terminus, the 492-residue chain is GTPase Obg (492 aa).

Residues 2 to 159 (PRFVDRVVIH…RELTLELKTV (158 aa)) form the Obg domain. The OBG-type G domain maps to 160-340 (ADVGLIGFPS…LIFGLWQMIS (181 aa)). Residues 166–173 (GFPSAGKS), 191–195 (FTTLV), 212–215 (DVPG), 292–295 (NKID), and 321–323 (STV) each bind GTP. Mg(2+) contacts are provided by Ser-173 and Thr-193. In terms of domain architecture, OCT spans 358–438 (PVPVDDSGFR…IGDMTFDWEP (81 aa)). The segment at 441 to 492 (PAGQQVVLSGRGTDARLERTERVGAAERKAARRQRRTGDDAERGTTERGENT) is disordered. Composition is skewed to basic and acidic residues over residues 453 to 469 (TDAR…AERK) and 476 to 492 (RTGD…GENT).

This sequence belongs to the TRAFAC class OBG-HflX-like GTPase superfamily. OBG GTPase family. As to quaternary structure, monomer. It depends on Mg(2+) as a cofactor.

It is found in the cytoplasm. Functionally, an essential GTPase which binds GTP, GDP and possibly (p)ppGpp with moderate affinity, with high nucleotide exchange rates and a fairly low GTP hydrolysis rate. Plays a role in control of the cell cycle, stress response, ribosome biogenesis and in those bacteria that undergo differentiation, in morphogenesis control. The polypeptide is GTPase Obg (Mycolicibacterium paratuberculosis (strain ATCC BAA-968 / K-10) (Mycobacterium paratuberculosis)).